A 252-amino-acid polypeptide reads, in one-letter code: Phosphoglycolate phosphatase (252 aa).

The Nucleophile role is filled by aspartate 13. Residues aspartate 13, aspartate 15, and aspartate 192 each contribute to the Mg(2+) site.

This sequence belongs to the HAD-like hydrolase superfamily. CbbY/CbbZ/Gph/YieH family. As to quaternary structure, monomer. The cofactor is Mg(2+). Requires chloride as cofactor.

It catalyses the reaction 2-phosphoglycolate + H2O = glycolate + phosphate. Its pathway is organic acid metabolism; glycolate biosynthesis; glycolate from 2-phosphoglycolate: step 1/1. Specifically catalyzes the dephosphorylation of 2-phosphoglycolate. Is involved in the dissimilation of the intracellular 2-phosphoglycolate formed during the DNA repair of 3'-phosphoglycolate ends, a major class of DNA lesions induced by oxidative stress. The chain is Phosphoglycolate phosphatase from Shigella boydii serotype 4 (strain Sb227).